The sequence spans 231 residues: 2-amino-5-formylamino-6-ribosylaminopyrimidin-4(3H)-one 5'-monophosphate deformylase (231 aa).

Fe cation contacts are provided by Glu-29, His-31, Asp-40, and His-110.

This sequence belongs to the creatininase superfamily. FAPy deformylase family. As to quaternary structure, homodimer. Fe(2+) serves as cofactor. The cofactor is Zn(2+).

The enzyme catalyses 2-amino-5-formylamino-6-(5-phospho-D-ribosylamino)pyrimidin-4(3H)-one + H2O = 2,5-diamino-6-(1-D-ribosylamino)pyrimidin-4(3H)-one 5'-phosphate + formate + H(+). It functions in the pathway cofactor biosynthesis; coenzyme F420 biosynthesis. It participates in cofactor biosynthesis; riboflavin biosynthesis. Functionally, catalyzes the hydrolysis of the formamide of 2-amino-5-formylamino-6-ribosylamino-4(3H)-pyrimidinone 5'-monophosphate (FAPy) to form 2,5-diamino-6-ribosylamino-4(3H)-pyrimidinone 5'-phosphate (APy). In Methanothermobacter marburgensis (strain ATCC BAA-927 / DSM 2133 / JCM 14651 / NBRC 100331 / OCM 82 / Marburg) (Methanobacterium thermoautotrophicum), this protein is 2-amino-5-formylamino-6-ribosylaminopyrimidin-4(3H)-one 5'-monophosphate deformylase.